Consider the following 338-residue polypeptide: MREPAFWHRPPSLLSRLLLPFGAVYGEVTAARMQKVGIETGVPVLCVGNYHLGGAGKTPTTLALVQLLRDLGEHPVVLSRGYGGRLRGPILVDAKRHSAADVGDEPLMMARTAPVVVARERTDGAALARSQGASVIVMDDGFQNPALVKDASLIVIDSRRGVGNGCVFPAGPLRAPLPLQVARTDVMIIVGDGQAADAVAAQIAARGGPVLRARLAPDETSLERLKGRRVLAFAGIGDPARFFATLRASGVEIAEQRAFPDHHPFTADELASLADSARRGGLTLVTTEKDLARIGPDAASLGSDLVALAVTLVVEEEARLRRFLLERINQARTKQFAR.

51-58 lines the ATP pocket; the sequence is HLGGAGKT.

It belongs to the LpxK family.

The catalysed reaction is a lipid A disaccharide + ATP = a lipid IVA + ADP + H(+). The protein operates within glycolipid biosynthesis; lipid IV(A) biosynthesis; lipid IV(A) from (3R)-3-hydroxytetradecanoyl-[acyl-carrier-protein] and UDP-N-acetyl-alpha-D-glucosamine: step 6/6. In terms of biological role, transfers the gamma-phosphate of ATP to the 4'-position of a tetraacyldisaccharide 1-phosphate intermediate (termed DS-1-P) to form tetraacyldisaccharide 1,4'-bis-phosphate (lipid IVA). This chain is Tetraacyldisaccharide 4'-kinase, found in Rhodopseudomonas palustris (strain BisB5).